The sequence spans 509 residues: L-aspartate semialdehyde sulfurtransferase (509 aa).

Residue Cys-133 is the Cysteine persulfide intermediate of the active site. CBS domains lie at 394–450 (LSKP…NKKT) and 455–509 (MTRN…GGKK). The S-methyl-5'-thioadenosine site is built by Ser-395, Ile-399, and His-421. S-adenosyl-L-methionine is bound by residues Asp-439, Thr-456, Ile-460, and 479–482 (NISG). 497-500 (TSED) lines the S-methyl-5'-thioadenosine pocket.

This sequence belongs to the L-aspartate semialdehyde sulfurtransferase family. As to quaternary structure, homodimer. May form a complex with MJ0099.

The catalysed reaction is L-aspartate 4-semialdehyde + reduced 2[4Fe-4S]-[ferredoxin] + hydrogen sulfide + 3 H(+) = oxidized 2[4Fe-4S]-[ferredoxin] + L-homocysteine + H2O. The protein operates within amino-acid biosynthesis. Its activity is regulated as follows. The ligand-induced conformational reorganization of the protein could be an important regulatory mechanism. Required for O-acetylhomoserine sulfhydrylase (OAHS)-independent homocysteine (Hcy) biosynthesis. Together with MJ0099, catalyzes the condensation of sulfide with aspartate semialdehyde to generate homocysteine. Likely functions through persulfide intermediate. The polypeptide is L-aspartate semialdehyde sulfurtransferase (Methanocaldococcus jannaschii (strain ATCC 43067 / DSM 2661 / JAL-1 / JCM 10045 / NBRC 100440) (Methanococcus jannaschii)).